A 205-amino-acid chain; its full sequence is Small ribosomal subunit protein uS5 (205 aa).

The region spanning 49–112 (LVDEVLCIDM…TNAKLNIVKV (64 aa)) is the S5 DRBM domain.

This sequence belongs to the universal ribosomal protein uS5 family. Part of the 30S ribosomal subunit. Contacts protein S4.

Its function is as follows. With S4 and S12 plays an important role in translational accuracy. This Methanocorpusculum labreanum (strain ATCC 43576 / DSM 4855 / Z) protein is Small ribosomal subunit protein uS5.